Reading from the N-terminus, the 290-residue chain is 4-hydroxybenzoate octaprenyltransferase (290 aa).

The next 8 membrane-spanning stretches (helical) occupy residues 23–43 (IGAL…TPGV), 46–66 (LWIL…GCVV), 99–119 (LFVV…TMTI), 141–161 (LPQV…FAAV), 163–183 (ESVP…AVAY), 213–233 (LIIG…GELN), 234–254 (GLGW…VYQQ), and 268–288 (AFMN…MSYW).

It belongs to the UbiA prenyltransferase family. Mg(2+) serves as cofactor.

Its subcellular location is the cell inner membrane. The enzyme catalyses all-trans-octaprenyl diphosphate + 4-hydroxybenzoate = 4-hydroxy-3-(all-trans-octaprenyl)benzoate + diphosphate. The protein operates within cofactor biosynthesis; ubiquinone biosynthesis. Catalyzes the prenylation of para-hydroxybenzoate (PHB) with an all-trans polyprenyl group. Mediates the second step in the final reaction sequence of ubiquinone-8 (UQ-8) biosynthesis, which is the condensation of the polyisoprenoid side chain with PHB, generating the first membrane-bound Q intermediate 3-octaprenyl-4-hydroxybenzoate. This is 4-hydroxybenzoate octaprenyltransferase from Escherichia coli O6:K15:H31 (strain 536 / UPEC).